The primary structure comprises 298 residues: Thymidylate synthase (298 aa).

Residues arginine 25 and 159-160 contribute to the dUMP site; that span reads RR. Residue cysteine 179 is the Nucleophile of the active site. DUMP-binding positions include 200–203, asparagine 211, and 241–243; these read RSVD and HLY. Aspartate 203 contacts (6R)-5,10-methylene-5,6,7,8-tetrahydrofolate. Alanine 297 lines the (6R)-5,10-methylene-5,6,7,8-tetrahydrofolate pocket.

This sequence belongs to the thymidylate synthase family. Bacterial-type ThyA subfamily. In terms of assembly, homodimer.

It is found in the cytoplasm. The catalysed reaction is dUMP + (6R)-5,10-methylene-5,6,7,8-tetrahydrofolate = 7,8-dihydrofolate + dTMP. It functions in the pathway pyrimidine metabolism; dTTP biosynthesis. Catalyzes the reductive methylation of 2'-deoxyuridine-5'-monophosphate (dUMP) to 2'-deoxythymidine-5'-monophosphate (dTMP) while utilizing 5,10-methylenetetrahydrofolate (mTHF) as the methyl donor and reductant in the reaction, yielding dihydrofolate (DHF) as a by-product. This enzymatic reaction provides an intracellular de novo source of dTMP, an essential precursor for DNA biosynthesis. In Cereibacter sphaeroides (strain ATCC 17029 / ATH 2.4.9) (Rhodobacter sphaeroides), this protein is Thymidylate synthase.